A 95-amino-acid chain; its full sequence is Co-chaperonin GroES (95 aa).

This sequence belongs to the GroES chaperonin family. In terms of assembly, heptamer of 7 subunits arranged in a ring. Interacts with the chaperonin GroEL.

The protein resides in the cytoplasm. Its function is as follows. Together with the chaperonin GroEL, plays an essential role in assisting protein folding. The GroEL-GroES system forms a nano-cage that allows encapsulation of the non-native substrate proteins and provides a physical environment optimized to promote and accelerate protein folding. GroES binds to the apical surface of the GroEL ring, thereby capping the opening of the GroEL channel. The polypeptide is Co-chaperonin GroES (Streptococcus mutans serotype c (strain ATCC 700610 / UA159)).